Reading from the N-terminus, the 418-residue chain is Dual-specificity RNA methyltransferase RlmN (418 aa).

The segment at 1–21 (MADTSLMPIPGQVDPVPAPRD) is disordered. The active-site Proton acceptor is the E122. One can recognise a Radical SAM core domain in the interval 128-383 (DADRGTLCVS…APVRTPRGRD (256 aa)). A disulfide bond links C135 and C388. The [4Fe-4S] cluster site is built by C142, C146, and C149. Residues 212-213 (GE), S244, 266-268 (SLH), and N345 contribute to the S-adenosyl-L-methionine site. The S-methylcysteine intermediate role is filled by C388. The segment at 393-418 (TAAQKKSRAERDREAAAEAEAAASQA) is disordered. A compositionally biased stretch (basic and acidic residues) spans 399–408 (SRAERDREAA).

Belongs to the radical SAM superfamily. RlmN family. It depends on [4Fe-4S] cluster as a cofactor.

Its subcellular location is the cytoplasm. The enzyme catalyses adenosine(2503) in 23S rRNA + 2 reduced [2Fe-2S]-[ferredoxin] + 2 S-adenosyl-L-methionine = 2-methyladenosine(2503) in 23S rRNA + 5'-deoxyadenosine + L-methionine + 2 oxidized [2Fe-2S]-[ferredoxin] + S-adenosyl-L-homocysteine. It catalyses the reaction adenosine(37) in tRNA + 2 reduced [2Fe-2S]-[ferredoxin] + 2 S-adenosyl-L-methionine = 2-methyladenosine(37) in tRNA + 5'-deoxyadenosine + L-methionine + 2 oxidized [2Fe-2S]-[ferredoxin] + S-adenosyl-L-homocysteine. Functionally, specifically methylates position 2 of adenine 2503 in 23S rRNA and position 2 of adenine 37 in tRNAs. m2A2503 modification seems to play a crucial role in the proofreading step occurring at the peptidyl transferase center and thus would serve to optimize ribosomal fidelity. The protein is Dual-specificity RNA methyltransferase RlmN of Erythrobacter litoralis (strain HTCC2594).